A 288-amino-acid polypeptide reads, in one-letter code: MGCCGCSGGCGSGCGGCGSGCGGCGSGCGGCGSGCGGCGSGCGGCGSSCCVPICCCKPVCCCVPACSCSSCGSCGGSKGGYGSCGGSKGGCVSCGGSKGGCGSCGGSKGGCGSCGGSKGGCGSCGGSKGGCVSCGGSKGGCGSCGGSKGGCVSCGGSKGGCGSCGGSKGGCGSCGGSKGGCGSCGGSKGGCGSCGCSQCSCCKPCCCSSGCGSSCCQSSCCKPCCSSSGCGSSCCQSSCCKPYCCQSSCCKPCCSSSGCGSSCCQSSCCNPCCSQSSCCVPVCCQCKI.

A run of 9 repeats spans residues 49 to 52, 55 to 58, 61 to 64, 201 to 204, 220 to 223, 239 to 242, 249 to 252, 268 to 271, and 278 to 281. The tract at residues 49 to 281 is 9 X 4 AA repeats of C-C-X-P; sequence CCVPICCCKP…CCSQSSCCVP (233 aa).

It belongs to the KRTAP type 5 family. In terms of assembly, interacts with hair keratins. In terms of tissue distribution, restricted to hair root, not detected in any other tissues.

Functionally, in the hair cortex, hair keratin intermediate filaments are embedded in an interfilamentous matrix, consisting of hair keratin-associated protein (KRTAP), which are essential for the formation of a rigid and resistant hair shaft through their extensive disulfide bond cross-linking with abundant cysteine residues of hair keratins. The matrix proteins include the high-sulfur and high-glycine-tyrosine keratins. The chain is Keratin-associated protein 5-4 (KRTAP5-4) from Homo sapiens (Human).